A 1251-amino-acid chain; its full sequence is Phospholipid-transporting ATPase IC (1251 aa).

The segment at 1–52 (MSTERDSETTFDEESQPNDEVVPYSDDETEDELEDQGSTVEPEQNRVNREAE) is disordered. Over 1-121 (MSTERDSETT…LFEQFKRAAN (121 aa)) the chain is Cytoplasmic. The span at 25–35 (SDDETEDELED) shows a compositional bias: acidic residues. Over residues 43–52 (EQNRVNREAE) the composition is skewed to basic and acidic residues. The helical transmembrane segment at 122-142 (FYFLILLILQAIPQISTLAWY) threads the bilayer. At 143–144 (TT) the chain is on the exoplasmic loop side. Residues 145–165 (LVPLLLVLGITAIKDLVDDVA) traverse the membrane as a helical segment. Over 166-339 (RHKMDKEINN…RTKIDYLMNY (174 aa)) the chain is Cytoplasmic. Residues 340 to 360 (MVYTIFIVLILVSAGLAIGHA) form a helical membrane-spanning segment. The Exoplasmic loop portion of the chain corresponds to 361–385 (YWEAQVGNYSWYLYDGENATPSYRG). A helical transmembrane segment spans residues 386–406 (FLNFWGYIIVLNTMVPISLYV). Topologically, residues 407-952 (SVEVIRLGQS…SYIRMCKFLR (546 aa)) are cytoplasmic. The 4-aspartylphosphate intermediate role is filled by D454. ATP is bound by residues D454, K455, T456, E555, F596, K619, R652, T732, G733, D734, R867, and K873. Residue D454 participates in Mg(2+) binding. T456 is a binding site for Mg(2+). Residue D893 participates in Mg(2+) binding. The ATP site is built by N896 and D897. Position 897 (D897) interacts with Mg(2+). Residues 953–973 (YFFYKNFAFTLVHFWYSFFNG) form a helical membrane-spanning segment. Residues 974–982 (YSAQTAYED) lie on the Exoplasmic loop side of the membrane. The chain crosses the membrane as a helical span at residues 983-1003 (WFITLYNVLYSSLPVLLMGLL). Residues 1004 to 1032 (DQDVSDKLSLRFPGLYVVGQRDLLFNYKR) are Cytoplasmic-facing. The chain crosses the membrane as a helical span at residues 1033-1053 (FFVSLLHGVLTSMVLFFIPLG). The Exoplasmic loop portion of the chain corresponds to 1054–1071 (AYLQTVGQDGEAPSDYQS). The chain crosses the membrane as a helical span at residues 1072-1092 (FAVTVASALVITVNFQIGLDT). The Cytoplasmic portion of the chain corresponds to 1093 to 1094 (SY). A helical transmembrane segment spans residues 1095–1115 (WTFVNAFSIFGSIALYFGIMF). Residues 1116 to 1142 (DFHSAGIHVLFPSAFQFTGTASNALRQ) lie on the Exoplasmic loop side of the membrane. The helical transmembrane segment at 1143–1163 (PYIWLTIILTVAVCLLPVVAI) threads the bilayer. Over 1164-1251 (RFLSMTIWPS…TAEYRRTVES (88 aa)) the chain is Cytoplasmic. At S1223 the chain carries Phosphoserine.

Belongs to the cation transport ATPase (P-type) (TC 3.A.3) family. Type IV subfamily. As to quaternary structure, component of a P4-ATPase flippase complex which consists of a catalytic alpha subunit ATP8B1 and an accessory beta subunit TMEM30A. The flippase ATP8B1:TMEM30A complex can form an intermediate phosphoenzyme in vitro. Also interacts with beta subunit TMEM30B. It depends on Mg(2+) as a cofactor. As to expression, hepatocytes, bile duct, intestinal epithelial cells (cholangiocytes and ileocytes), and pancreatic acinar cells.

The protein localises to the cell membrane. It is found in the apical cell membrane. The protein resides in the cell projection. It localises to the stereocilium. Its subcellular location is the endoplasmic reticulum. The protein localises to the golgi apparatus. The catalysed reaction is ATP + H2O + phospholipidSide 1 = ADP + phosphate + phospholipidSide 2.. It catalyses the reaction a 1,2-diacyl-sn-glycero-3-phosphocholine(out) + ATP + H2O = a 1,2-diacyl-sn-glycero-3-phosphocholine(in) + ADP + phosphate + H(+). It carries out the reaction a 1,2-diacyl-sn-glycero-3-phospho-L-serine(out) + ATP + H2O = a 1,2-diacyl-sn-glycero-3-phospho-L-serine(in) + ADP + phosphate + H(+). Its function is as follows. Catalytic component of a P4-ATPase flippase complex which catalyzes the hydrolysis of ATP coupled to the transport of phospholipids, in particular phosphatidylcholines (PC), from the outer to the inner leaflet of the plasma membrane. May participate in the establishment of the canalicular membrane integrity by ensuring asymmetric distribution of phospholipids in the canicular membrane. Thus may have a role in the regulation of bile acids transport into the canaliculus, uptake of bile acids from intestinal contents into intestinal mucosa or both and protect hepatocytes from bile salts. Involved in the microvillus formation in polarized epithelial cells; the function seems to be independent from its flippase activity. Participates in correct apical membrane localization of CDC42, CFTR and SLC10A2. Enables CDC42 clustering at the apical membrane during enterocyte polarization through the interaction between CDC42 polybasic region and negatively charged membrane lipids provided by ATP8B1. Together with TMEM30A is involved in uptake of the synthetic drug alkylphospholipid perifosine. Required for the preservation of cochlear hair cells in the inner ear. According PubMed:20852622 is proposed to act as cardiolipin transporter during inflammatory injury; the function is questioned by PubMed:21475228. The polypeptide is Phospholipid-transporting ATPase IC (Mus musculus (Mouse)).